The primary structure comprises 430 residues: Glucose-1-phosphate adenylyltransferase (430 aa).

Alpha-D-glucose 1-phosphate contacts are provided by residues Gly163, 178-179 (EK), and Ser210.

It belongs to the bacterial/plant glucose-1-phosphate adenylyltransferase family. As to quaternary structure, homotetramer.

It catalyses the reaction alpha-D-glucose 1-phosphate + ATP + H(+) = ADP-alpha-D-glucose + diphosphate. It functions in the pathway glycan biosynthesis; glycogen biosynthesis. Its function is as follows. Involved in the biosynthesis of ADP-glucose, a building block required for the elongation reactions to produce glycogen. Catalyzes the reaction between ATP and alpha-D-glucose 1-phosphate (G1P) to produce pyrophosphate and ADP-Glc. This is Glucose-1-phosphate adenylyltransferase from Synechococcus elongatus (strain ATCC 33912 / PCC 7942 / FACHB-805) (Anacystis nidulans R2).